A 519-amino-acid polypeptide reads, in one-letter code: Cilia- and flagella-associated protein 157 (519 aa).

The segment covering 1–11 (MPPKKKGKRGP) has biased composition (basic residues). A disordered region spans residues 1-25 (MPPKKKGKRGPSAKTKEKETVRVAS). 2 coiled-coil regions span residues 28–185 (VTEQ…EKKV) and 241–356 (IELI…QRTL).

This sequence belongs to the CFAP157 family.

The protein resides in the cytoplasm. It localises to the cytoskeleton. The protein localises to the cilium basal body. Specifically required during spermatogenesis for flagellum morphogenesis and sperm motility. In Xenopus tropicalis (Western clawed frog), this protein is Cilia- and flagella-associated protein 157.